We begin with the raw amino-acid sequence, 1019 residues long: Antigenic heat-stable 120 kDa protein (1019 aa).

Residues 1-33 (MSKNDNQDISEFDPLNREFTEAEKQQQMQQEQE) form a disordered region. Residues 14–24 (PLNREFTEAEK) show a composition bias toward basic and acidic residues.

It localises to the cytoplasm. In Rickettsia typhi (strain ATCC VR-144 / Wilmington), this protein is Antigenic heat-stable 120 kDa protein (sca4).